We begin with the raw amino-acid sequence, 414 residues long: Methyl-CpG-binding domain protein 2 (414 aa).

Positions 1 to 152 are required for interaction with DHX9 and PRMT5; that stretch reads MRAHPGGGRC…GPRATESGKR (152 aa). The disordered stretch occupies residues 1 to 163; it reads MRAHPGGGRC…DCPALPPGWK (163 aa). A compositionally biased stretch (basic residues) spans 77–95; that stretch reads GRGRGRGRGRGRGRGRGRG. The span at 98-123 shows a compositional bias: gly residues; it reads QSGGSGLGGDGGGGAGGCGGGSGGGV. The MBD domain maps to 148 to 216; sequence ESGKRMDCPA…SSFDFRTGKM (69 aa). Position 184 is a phosphoserine (S184). A disordered region spans residues 217-244; that stretch reads MPSKLQKNKQRLRNDPLNQNKGKPDLNT. The segment covering 232–244 has biased composition (polar residues); that stretch reads PLNQNKGKPDLNT. At S410 the chain carries Phosphoserine.

As to quaternary structure, heterodimer with MBD3 (via N-terminus). Component of the MeCP1 complex that contains HDAC1 and HDAC2. Component of the nucleosome remodeling and deacetylase (NuRD) repressor complex, composed of core proteins MTA1, MTA2, MTA3, RBBP4, RBBP7, HDAC1, HDAC2, MBD2, MBD3, and peripherally associated proteins CDK2AP1, CDK2AP2, GATAD2A, GATAD2B, CHD3, CHD4 and CHD5. The exact stoichiometry of the NuRD complex is unknown, and some subunits such as MBD2 and MBD3, GATAD2A and GATAD2B, and CHD3, CHD4 and CHD5 define mutually exclusive NuRD complexes. Interacts with CDK2AP1. Interacts with DHX9. Interacts with DNMT1. Interacts with GATAD2A/p66-alpha. Interacts with GATAD2B/p66-beta. Interacts with GPN1. Interacts with MIZF. Interacts with PRMT5. Interacts with SIN3A. Interacts with SPHK2. Highly expressed in brain, heart, kidney, lung, skeletal muscle, spleen and testis. Detected at lower levels in embryonic stem cells.

The protein localises to the nucleus. Its subcellular location is the chromosome. Its function is as follows. Binds CpG islands in promoters where the DNA is methylated at position 5 of cytosine within CpG dinucleotides. Binds hemimethylated DNA as well. Recruits histone deacetylases and DNA methyltransferases to chromatin. Acts as a component of the histone deacetylase NuRD complex which participates in the remodeling of chromatin. Acts as transcriptional repressor and plays a role in gene silencing. Functions as a scaffold protein, targeting GATAD2A and GATAD2B to chromatin to promote repression. May enhance the activation of some unmethylated cAMP-responsive promoters. Selectively represses transcription activity of methylated rRNA promoters. This Mus musculus (Mouse) protein is Methyl-CpG-binding domain protein 2.